A 448-amino-acid chain; its full sequence is Methylenetetrahydrofolate--tRNA-(uracil-5-)-methyltransferase TrmFO (448 aa).

Position 13–18 (13–18) interacts with FAD; that stretch reads GAGLAG.

Belongs to the MnmG family. TrmFO subfamily. It depends on FAD as a cofactor.

The protein localises to the cytoplasm. The enzyme catalyses uridine(54) in tRNA + (6R)-5,10-methylene-5,6,7,8-tetrahydrofolate + NADH + H(+) = 5-methyluridine(54) in tRNA + (6S)-5,6,7,8-tetrahydrofolate + NAD(+). It carries out the reaction uridine(54) in tRNA + (6R)-5,10-methylene-5,6,7,8-tetrahydrofolate + NADPH + H(+) = 5-methyluridine(54) in tRNA + (6S)-5,6,7,8-tetrahydrofolate + NADP(+). Catalyzes the folate-dependent formation of 5-methyl-uridine at position 54 (M-5-U54) in all tRNAs. The protein is Methylenetetrahydrofolate--tRNA-(uracil-5-)-methyltransferase TrmFO of Streptococcus pyogenes serotype M6 (strain ATCC BAA-946 / MGAS10394).